A 287-amino-acid polypeptide reads, in one-letter code: O-ureido-serine racemase (287 aa).

Asn20 serves as a coordination point for substrate. Cys81 (proton donor) is an active-site residue. Residues 82–83 (GN), Asn167, Asn200, and 218–219 (EY) each bind substrate. Cys227 serves as the catalytic Proton acceptor. 228–229 (GS) serves as a coordination point for substrate.

It belongs to the diaminopimelate epimerase family. In terms of assembly, monomer.

Its subcellular location is the cytoplasm. It carries out the reaction O-ureido-L-serine = O-ureido-D-serine. With respect to regulation, inhibited by thiol-inactivating reagents such as iodoacetamide and Hg(2+) ions. Its function is as follows. Involved in the biosynthesis of the antibiotic D-cycloserine (DCS), a cyclic structural analog of D-alanine, used as an antitubercular agent. Catalyzes the stereoinversion of O-ureido-L-serine to O-ureido-D-serine. The polypeptide is O-ureido-serine racemase (Streptomyces lavendulae).